A 1198-amino-acid chain; its full sequence is DNA polymerase (1198 aa).

Disordered regions lie at residues methionine 1 to threonine 87, leucine 179 to proline 199, and glutamine 904 to glycine 930. 2 stretches are compositionally biased toward low complexity: residues glutamine 30 to alanine 40 and alanine 57 to proline 68.

The protein belongs to the DNA polymerase type-B family. Heterodimer with the terminal protein; this heterodimer binds to bp 9 to 18 of the genome. Forms a complex with viral pTP, DBP and hosts NFIA and POU2F1/OCT1 for initiation of replication.

Its subcellular location is the host nucleus. The enzyme catalyses DNA(n) + a 2'-deoxyribonucleoside 5'-triphosphate = DNA(n+1) + diphosphate. Eukaryotic-type DNA polymerase involved in viral genomic replication. DNA synthesis is protein primed, and acts in a strand displacement replication. Assembles in complex with viral pTP, DBP, host NFIA and host POU2F1/OCT1 on viral origin of replication. The polymerase covalently transfers dCMP onto pTP, thereby initiating complementary strand synthesis. In Homo sapiens (Human), this protein is DNA polymerase.